Reading from the N-terminus, the 269-residue chain is Hydroxyethylthiazole kinase (269 aa).

M42 contacts substrate. Residues R118 and S164 each coordinate ATP. A substrate-binding site is contributed by G191.

The protein belongs to the Thz kinase family. Mg(2+) is required as a cofactor.

The enzyme catalyses 5-(2-hydroxyethyl)-4-methylthiazole + ATP = 4-methyl-5-(2-phosphooxyethyl)-thiazole + ADP + H(+). It participates in cofactor biosynthesis; thiamine diphosphate biosynthesis; 4-methyl-5-(2-phosphoethyl)-thiazole from 5-(2-hydroxyethyl)-4-methylthiazole: step 1/1. In terms of biological role, catalyzes the phosphorylation of the hydroxyl group of 4-methyl-5-beta-hydroxyethylthiazole (THZ). The sequence is that of Hydroxyethylthiazole kinase from Listeria monocytogenes serotype 4a (strain HCC23).